An 89-amino-acid polypeptide reads, in one-letter code: 10 kDa fusion protein (89 aa).

The segment at 1–29 (MDENDGENLLTQPDDTGNSTNGVYAAGAP) is disordered. Positions 9–22 (LLTQPDDTGNSTNG) are enriched in polar residues. Asparagine 18 is a glycosylation site (N-linked (GlcNAc...) asparagine; by host).

Belongs to the poxviruses fusion protein family. Homotrimer, covalently linked.

It localises to the virion membrane. This Capra hircus (Goat) protein is 10 kDa fusion protein.